Consider the following 341-residue polypeptide: MSEQESDEVKRMKQLEEARKRVEELKKKKNKKNKGKKNKNSSATGSIGSETPDLEGTPGEESTQEETVKANSTKSENNDQNDVDEESEEKEIEQVKSDPSGTTEKDIEEINSTSSNVGKDDAENTKKEEVQEVIKNNNDEQTADAGKTIEPQEEKKIVQTQEGNEPSNTSEAADDLFANDGNEESDFLTTIKKQKEEDELTKLRAENEKLTQENKQLKFLNMENETTVDDLQDQLQEKEDIINGLQNDLQTARDELIAAVEKLKLAEAKAARNTTATPIQFADFNTSSNNLTPSQSVTNSGTQVAHGNNMEVDRVMLNKWRQWNVDMTTWRSIGSGPIMEF.

Residues 1 to 181 (MSEQESDEVK…AADDLFANDG (181 aa)) are disordered. Ser2 is modified (N-acetylserine). A coiled-coil region spans residues 2 to 41 (SEQESDEVKRMKQLEEARKRVEELKKKKNKKNKGKKNKNS). Residues 7-26 (DEVKRMKQLEEARKRVEELK) are compositionally biased toward basic and acidic residues. Positions 27 to 39 (KKKNKKNKGKKNK) are enriched in basic residues. Residues 69–78 (KANSTKSENN) are compositionally biased toward polar residues. A compositionally biased stretch (acidic residues) spans 79 to 91 (DQNDVDEESEEKE). Ser87 carries the post-translational modification Phosphoserine. A compositionally biased stretch (basic and acidic residues) spans 118 to 132 (GKDDAENTKKEEVQE). The segment covering 158-171 (VQTQEGNEPSNTSE) has biased composition (polar residues). A Phosphoserine modification is found at Ser170. A coiled-coil region spans residues 188–272 (LTTIKKQKEE…LKLAEAKAAR (85 aa)). Thr292 is subject to Phosphothreonine.

Interacts with GRH1 (via C-terminus), probably forming a heterooligomer consisting of a GRH1 dimer and a BUG1 dimer.

It localises to the cytoplasm. The protein localises to the golgi apparatus. The protein resides in the cis-Golgi network membrane. Its function is as follows. Involved in ER to Golgi vesicle-mediated transport by either facilitating USO1-dependent and -independent tethering or increasing target accuracy of fusion events of COPII-coated vesicles. This Saccharomyces cerevisiae (strain ATCC 204508 / S288c) (Baker's yeast) protein is Binder of USO1 and GRH1 protein 1.